Consider the following 563-residue polypeptide: Pyruvate decarboxylase (563 aa).

Pyruvate-binding residues include aspartate 28 and histidine 115. Residues threonine 390 and 413–415 (GSI) each bind thiamine diphosphate. Aspartate 444 is a binding site for Mg(2+). Thiamine diphosphate-binding positions include 445-446 (GS) and 471-476 (NDGYTI). Residues asparagine 471 and glycine 473 each contribute to the Mg(2+) site. Residue glutamate 477 participates in pyruvate binding.

This sequence belongs to the TPP enzyme family. As to quaternary structure, homotetramer. It depends on Mg(2+) as a cofactor. Requires thiamine diphosphate as cofactor.

The enzyme catalyses a 2-oxocarboxylate + H(+) = an aldehyde + CO2. It carries out the reaction pyruvate + H(+) = acetaldehyde + CO2. This chain is Pyruvate decarboxylase (PDC1), found in Kluyveromyces lactis (strain ATCC 8585 / CBS 2359 / DSM 70799 / NBRC 1267 / NRRL Y-1140 / WM37) (Yeast).